A 322-amino-acid polypeptide reads, in one-letter code: Pantothenate kinase (322 aa).

G101 to S108 contributes to the ATP binding site.

This sequence belongs to the prokaryotic pantothenate kinase family.

The protein resides in the cytoplasm. The catalysed reaction is (R)-pantothenate + ATP = (R)-4'-phosphopantothenate + ADP + H(+). The protein operates within cofactor biosynthesis; coenzyme A biosynthesis; CoA from (R)-pantothenate: step 1/5. In Psychromonas ingrahamii (strain DSM 17664 / CCUG 51855 / 37), this protein is Pantothenate kinase.